The following is a 342-amino-acid chain: N-acetyl-gamma-glutamyl-phosphate reductase (342 aa).

The active site involves cysteine 149.

Belongs to the NAGSA dehydrogenase family. Type 1 subfamily.

The protein localises to the cytoplasm. It carries out the reaction N-acetyl-L-glutamate 5-semialdehyde + phosphate + NADP(+) = N-acetyl-L-glutamyl 5-phosphate + NADPH + H(+). It functions in the pathway amino-acid biosynthesis; L-arginine biosynthesis; N(2)-acetyl-L-ornithine from L-glutamate: step 3/4. Functionally, catalyzes the NADPH-dependent reduction of N-acetyl-5-glutamyl phosphate to yield N-acetyl-L-glutamate 5-semialdehyde. The sequence is that of N-acetyl-gamma-glutamyl-phosphate reductase from Ruegeria pomeroyi (strain ATCC 700808 / DSM 15171 / DSS-3) (Silicibacter pomeroyi).